The primary structure comprises 259 residues: Eukaryotic translation initiation factor 4E1 (259 aa).

Positions 1–70 are disordered; it reads MQSDFHRMKN…TATTTAPAGD (70 aa). Positions 18-27 are enriched in polar residues; the sequence is FKTSAPSTEQ. The span at 41-51 shows a compositional bias: basic and acidic residues; the sequence is EAKDVKPKEDP. The span at 54–70 shows a compositional bias: low complexity; the sequence is TGEPAGNTATTTAPAGD. MRNA contacts are provided by residues 100 to 101, 146 to 147, and 199 to 204; these read WE and RGKSNK.

The protein belongs to the eukaryotic initiation factor 4E family. In terms of assembly, eIF4F is a multi-subunit complex, the composition of which varies with external and internal environmental conditions. It is composed of at least eIF4A, eIF4E1 and eIF4G1. Recruited by cup in oocytes and in early embryos, preventing the interaction with eIF4G. The interaction with cup therefore prevents the translation of key transcripts such as oskar (osk) and nanos (nos) in some regions in the early embryo. Interacts with mxt. Interacts with 4E-T and Thor. Forms a RNP containing at least me31B, eIF4E1, cup, tral and pAbp; this interaction is required for the translational silencing of maternal mRNAs during the maternal-to-zygotic transition. In terms of processing, phosphorylation increases the ability of the protein to bind to mRNA caps and to form the eIF4F complex. In terms of tissue distribution, expressed at the posterior end of developing oocytes (at protein level). Preferential expression in the pole cells, at different developmental stages.

It is found in the cytoplasm. Its subcellular location is the cytoplasmic ribonucleoprotein granule. It localises to the nucleus. The protein localises to the nuclear body. Functionally, recognizes and binds the 7-methylguanosine (m7G)-containing mRNA cap during an early step in the initiation of protein synthesis and facilitates ribosome binding by inducing the unwinding of the mRNAs secondary structures. In 0-1 hour embryos, forms a complex with me31B, cup, tral and pAbp which binds to various mRNAs including maternal mRNAs, and down-regulates their expression during the maternal-to-zygotic transition. In Drosophila melanogaster (Fruit fly), this protein is Eukaryotic translation initiation factor 4E1.